The chain runs to 277 residues: Large ribosomal subunit protein uL2 (277 aa).

Residues 222–277 (GSVMNPNDHPHGGGEGKSPVGHPGPLTPWGKPALGLKTRKNKKYSDKFIIKRKNKK) are disordered.

Belongs to the universal ribosomal protein uL2 family. In terms of assembly, part of the 50S ribosomal subunit. Forms a bridge to the 30S subunit in the 70S ribosome.

Its function is as follows. One of the primary rRNA binding proteins. Required for association of the 30S and 50S subunits to form the 70S ribosome, for tRNA binding and peptide bond formation. It has been suggested to have peptidyltransferase activity; this is somewhat controversial. Makes several contacts with the 16S rRNA in the 70S ribosome. The sequence is that of Large ribosomal subunit protein uL2 from Clostridium kluyveri (strain NBRC 12016).